Here is a 330-residue protein sequence, read N- to C-terminus: Probable WRKY transcription factor 74 (330 aa).

The segment at residues 256 to 322 (KIADIPPDEY…YEGEHNHSRI (67 aa)) is a DNA-binding region (WRKY).

The protein localises to the nucleus. Its function is as follows. Transcription factor. Interacts specifically with the W box (5'-(T)TGAC[CT]-3'), a frequently occurring elicitor-responsive cis-acting element. This is Probable WRKY transcription factor 74 (WRKY74) from Arabidopsis thaliana (Mouse-ear cress).